The primary structure comprises 4660 residues: Low-density lipoprotein receptor-related protein 2 (4660 aa).

A signal peptide spans 1–25 (MERGAAAAAWMLLLAIAACLEPVSS). Topologically, residues 26 to 4425 (QECGSGNFRC…LSRGIPPGTT (4400 aa)) are extracellular. 6 LDL-receptor class A domains span residues 27 to 63 (ECGS…IGCP), 66 to 104 (SCES…QNCA), 107 to 143 (TCSA…RNCH), 141 to 180 (NCHY…ANCT), 182 to 218 (LCSQ…RNCN), and 221 to 257 (TCGG…DGCE). Disulfide bonds link cysteine 28–cysteine 40, cysteine 35–cysteine 53, cysteine 47–cysteine 62, cysteine 67–cysteine 80, cysteine 74–cysteine 93, cysteine 87–cysteine 103, cysteine 108–cysteine 120, cysteine 115–cysteine 133, cysteine 127–cysteine 142, cysteine 142–cysteine 157, cysteine 152–cysteine 170, cysteine 164–cysteine 179, cysteine 183–cysteine 195, cysteine 190–cysteine 208, cysteine 202–cysteine 217, cysteine 222–cysteine 234, cysteine 229–cysteine 247, and cysteine 241–cysteine 256. Asparagine 159 and asparagine 178 each carry an N-linked (GlcNAc...) asparagine glycan. A glycan (N-linked (GlcNAc...) asparagine) is linked at asparagine 259. An LDL-receptor class A 7 domain is found at 264-307 (RCYPREWACPGSGRCISIDKVCDGVPDCPEGDDENNVTSGRTCG). Intrachain disulfides connect cysteine 265–cysteine 278, cysteine 272–cysteine 291, and cysteine 285–cysteine 306. Asparagine 299 and asparagine 340 each carry an N-linked (GlcNAc...) asparagine glycan. The region spanning 347 to 382 (DFDDCQIWGICDQKCENRQGRHQCLCEEGYILERGQ) is the EGF-like 1; calcium-binding domain. 2 disulfides stabilise this stretch: cysteine 351-cysteine 361 and cysteine 357-cysteine 370. LDL-receptor class B repeat units follow at residues 435–477 (HRVF…DWIN), 478–520 (NKLY…DPTV), 521–567 (GYLF…DLVS), and 568–612 (KRVY…FEEH). The N-linked (GlcNAc...) asparagine glycan is linked to asparagine 462. Asparagine 657 carries an N-linked (GlcNAc...) asparagine glycan. LDL-receptor class B repeat units lie at residues 752-794 (STVF…DWIS), 795-836 (RNLY…HPTA), 837-880 (GYMF…DWSA), and 881-924 (SRLY…FKDN). A glycan (N-linked (GlcNAc...) asparagine) is linked at asparagine 865. In terms of domain architecture, LDL-receptor class A 8 spans 1024-1060 (QCGSLSFPCNNGKCVPSFFRCDGVDDCHDNSDEHQCG). 3 disulfide bridges follow: cysteine 1025–cysteine 1037, cysteine 1032–cysteine 1050, and cysteine 1044–cysteine 1059. An N-linked (GlcNAc...) asparagine glycan is attached at asparagine 1063. 7 consecutive LDL-receptor class A domains span residues 1065–1102 (TCSP…QNCP), 1109–1145 (TCPS…KNCQ), 1149–1185 (TCQP…AGCV), 1187–1224 (NCTS…AGCP), 1230–1268 (MCHP…TGCV), 1271–1307 (TCSP…KDCP), and 1312–1350 (HCPS…PLCN). 9 disulfides stabilise this stretch: cysteine 1066–cysteine 1079, cysteine 1073–cysteine 1092, cysteine 1086–cysteine 1101, cysteine 1110–cysteine 1122, cysteine 1117–cysteine 1135, cysteine 1129–cysteine 1144, cysteine 1150–cysteine 1162, cysteine 1157–cysteine 1175, and cysteine 1169–cysteine 1184. Residues tryptophan 1127, aspartate 1130, aspartate 1132, aspartate 1134, aspartate 1140, and glutamate 1141 each contribute to the Ca(2+) site. N-linked (GlcNAc...) asparagine glycosylation is present at asparagine 1187. Disulfide bonds link cysteine 1188–cysteine 1201, cysteine 1195–cysteine 1214, cysteine 1208–cysteine 1223, cysteine 1231–cysteine 1244, cysteine 1238–cysteine 1257, cysteine 1251–cysteine 1267, cysteine 1272–cysteine 1284, cysteine 1279–cysteine 1297, cysteine 1291–cysteine 1306, cysteine 1313–cysteine 1326, cysteine 1320–cysteine 1339, cysteine 1333–cysteine 1349, cysteine 1354–cysteine 1365, cysteine 1361–cysteine 1374, cysteine 1376–cysteine 1389, cysteine 1395–cysteine 1405, cysteine 1401–cysteine 1414, and cysteine 1416–cysteine 1429. The Ca(2+) site is built by tyrosine 1206, aspartate 1209, valine 1211, aspartate 1213, aspartate 1219, and glutamate 1220. Asparagine 1328 and asparagine 1341 each carry an N-linked (GlcNAc...) asparagine glycan. Residues 1350-1390 (NQDSCSHFNGGCTHQCMQGPFGATCLCPLGYQLANDTKTCE) enclose the EGF-like 2 domain. An N-linked (GlcNAc...) asparagine glycan is attached at asparagine 1384. Positions 1391 to 1430 (DINECDIPGFCSQHCVNMRGSFRCACDPEYTLESDGRTCK) constitute an EGF-like 3; calcium-binding domain. 3 N-linked (GlcNAc...) asparagine glycosylation sites follow: asparagine 1451, asparagine 1497, and asparagine 1551. LDL-receptor class B repeat units follow at residues 1479–1521 (GRVF…DWIG), 1522–1564 (RNLY…DPRM), 1567–1610 (NVMF…DYPN), 1611–1655 (RLIY…FEDF), and 1656–1696 (VYWT…IHPS). Residues asparagine 1676, asparagine 1733, and asparagine 1811 are each glycosylated (N-linked (GlcNAc...) asparagine). LDL-receptor class B repeat units follow at residues 1791–1833 (QFIY…DWVS), 1834–1883 (RNIY…DPAR), 1884–1931 (GKLY…DIQE), 1932–1973 (QKLY…YGSF), 1974–2014 (LYYS…YHRR), 2108–2157 (GFIY…DWAA), 2158–2202 (GNLY…DPKH), 2203–2246 (RYLF…DHDT), and 2247–2290 (GYIY…FGES). 3 N-linked (GlcNAc...) asparagine glycosylation sites follow: asparagine 2134, asparagine 2178, and asparagine 2225. N-linked (GlcNAc...) asparagine glycosylation occurs at asparagine 2396. LDL-receptor class B repeat units follow at residues 2432–2478 (NRIF…DWIN), 2479–2519 (RRIY…DPCR), 2520–2563 (GYMY…DLET), 2564–2605 (DLLY…YGQY), and 2606–2647 (IYWT…VVKT). Asparagine 2488 and asparagine 2548 each carry an N-linked (GlcNAc...) asparagine glycan. LDL-receptor class A domains are found at residues 2700 to 2738 (RCNQ…TVCA), 2741 to 2777 (TCRS…AGCL), 2780 to 2819 (NCNS…KNCP), 2822 to 2861 (TCPP…IYCA), 2864 to 2902 (TCRS…DTCG), 2907 to 2946 (TCRA…HHCE), 2949 to 2991 (NCSS…QNCT), 2994 to 3030 (TCSA…RGCS), 3033 to 3071 (PCHA…HLCH), and 3076 to 3112 (TCPL…KGCG). Intrachain disulfides connect cysteine 2701–cysteine 2713, cysteine 2708–cysteine 2726, cysteine 2720–cysteine 2737, cysteine 2742–cysteine 2754, cysteine 2749–cysteine 2767, cysteine 2761–cysteine 2776, cysteine 2781–cysteine 2794, cysteine 2789–cysteine 2807, cysteine 2801–cysteine 2818, cysteine 2823–cysteine 2836, cysteine 2830–cysteine 2849, cysteine 2843–cysteine 2860, cysteine 2865–cysteine 2878, cysteine 2872–cysteine 2891, cysteine 2885–cysteine 2901, cysteine 2908–cysteine 2920, cysteine 2915–cysteine 2933, and cysteine 2927–cysteine 2945. Asparagine 2782 is a glycosylation site (N-linked (GlcNAc...) asparagine). Asparagine 2810 is a glycosylation site (N-linked (GlcNAc...) asparagine). A glycan (N-linked (GlcNAc...) asparagine) is linked at asparagine 2949. 18 disulfides stabilise this stretch: cysteine 2950–cysteine 2967, cysteine 2957–cysteine 2980, cysteine 2974–cysteine 2990, cysteine 2995–cysteine 3007, cysteine 3002–cysteine 3020, cysteine 3014–cysteine 3029, cysteine 3034–cysteine 3046, cysteine 3041–cysteine 3059, cysteine 3053–cysteine 3070, cysteine 3077–cysteine 3089, cysteine 3084–cysteine 3102, cysteine 3096–cysteine 3111, cysteine 3116–cysteine 3128, cysteine 3124–cysteine 3137, cysteine 3139–cysteine 3152, cysteine 3158–cysteine 3169, cysteine 3165–cysteine 3178, and cysteine 3180–cysteine 3193. A glycan (N-linked (GlcNAc...) asparagine) is linked at asparagine 2989. In terms of domain architecture, EGF-like 4 spans 3112–3153 (GINECLDSSISRCDHNCTDTITSFYCSCLPGYKLMSDKRSCV). Residue asparagine 3127 is glycosylated (N-linked (GlcNAc...) asparagine). The region spanning 3154–3194 (DIDECKESPQLCSQKCENVVGSYICKCAPGYIREPDGKSCR) is the EGF-like 5; calcium-binding domain. N-linked (GlcNAc...) asparagine glycosylation is found at asparagine 3213, asparagine 3259, asparagine 3317, and asparagine 3357. 5 LDL-receptor class B repeats span residues 3241–3283 (KRLY…DWVS), 3284–3326 (RKLY…EHPR), 3335–3378 (GHVY…DYTN), 3379–3421 (DLLY…FEDT), and 3422–3462 (VFWT…YHPY). Asparagine 3448 is a glycosylation site (N-linked (GlcNAc...) asparagine). LDL-receptor class A domains follow at residues 3513 to 3551 (MCSS…DLCP), 3554 to 3592 (FCRL…VLCE), 3595 to 3633 (RCES…SHCA), 3636 to 3674 (TCRP…DECT), 3679 to 3717 (NCDN…QGCE), 3720 to 3757 (PCHP…ENCV), 3760 to 3796 (ECSE…RDCE), and 3799 to 3835 (TCHP…SACP). Disulfide bonds link cysteine 3514/cysteine 3527, cysteine 3521/cysteine 3540, cysteine 3534/cysteine 3550, cysteine 3555/cysteine 3567, cysteine 3562/cysteine 3580, cysteine 3574/cysteine 3591, cysteine 3596/cysteine 3608, cysteine 3603/cysteine 3621, cysteine 3615/cysteine 3632, cysteine 3637/cysteine 3649, cysteine 3644/cysteine 3662, cysteine 3656/cysteine 3673, cysteine 3680/cysteine 3694, cysteine 3688/cysteine 3707, cysteine 3701/cysteine 3716, cysteine 3721/cysteine 3734, cysteine 3729/cysteine 3747, cysteine 3741/cysteine 3756, cysteine 3761/cysteine 3773, cysteine 3768/cysteine 3786, cysteine 3780/cysteine 3795, cysteine 3800/cysteine 3812, cysteine 3807/cysteine 3825, and cysteine 3819/cysteine 3834. A glycan (N-linked (GlcNAc...) asparagine) is linked at asparagine 3566. Asparagine 3682 carries an N-linked (GlcNAc...) asparagine glycan. N-linked (GlcNAc...) asparagine glycosylation occurs at asparagine 3840. 3 LDL-receptor class A domains span residues 3843 to 3881 (YCPA…HLCF), 3884 to 3923 (PCES…EHCR), and 3929 to 3965 (PCTD…TGCN). 9 cysteine pairs are disulfide-bonded: cysteine 3844–cysteine 3856, cysteine 3851–cysteine 3869, cysteine 3863–cysteine 3880, cysteine 3885–cysteine 3898, cysteine 3893–cysteine 3911, cysteine 3905–cysteine 3922, cysteine 3930–cysteine 3942, cysteine 3937–cysteine 3955, and cysteine 3949–cysteine 3964. One can recognise an EGF-like 6 domain in the interval 3968-4003 (DNRTCAENICEQNCTQLSSGGFICSCRPGFKPSTSD). Asparagine 3969 and asparagine 3980 each carry an N-linked (GlcNAc...) asparagine glycan. 5 disulfide bridges follow: cysteine 3972–cysteine 3981, cysteine 3977–cysteine 3991, cysteine 4013–cysteine 4023, cysteine 4019–cysteine 4032, and cysteine 4034–cysteine 4049. The EGF-like 7; calcium-binding domain occupies 4009 to 4050 (DINECEEFGICPQSCRNSKGSYECFCVDGFKSMSTHYGERCA). N-linked (GlcNAc...) asparagine glycosylation occurs at asparagine 4070. LDL-receptor class B repeat units lie at residues 4156-4198 (RHIY…NPKL), 4199-4242 (GLMF…DYLN), and 4244-4285 (DRVY…FEDK). N-linked (GlcNAc...) asparagine glycosylation is present at asparagine 4329. Positions 4379–4413 (MPPPCRCMHGGNCYFDENELPKCKCSSGYSGEYCE) constitute an EGF-like 8 domain. Intrachain disulfides connect cysteine 4383/cysteine 4391, cysteine 4385/cysteine 4401, and cysteine 4403/cysteine 4412. A helical membrane pass occupies residues 4426–4446 (MAVLLTFVIVIIVGALVLVGL). Residues 4447–4660 (FHYRKTGSLL…ANLVKEDSDV (214 aa)) lie on the Cytoplasmic side of the membrane. Positions 4454–4463 (SLLPTLPKLP) match the SH3-binding motif. The short motif at 4457–4462 (PTLPKL) is the PxLPxI/L motif 1; mediates interaction with ANKRA2 element. The short motif at 4460–4465 (PKLPSL) is the PxLPxI/L motif 2; mediates interaction with ANKRA2 element. A phosphoserine mark is found at serine 4464 and serine 4467. The short motif at 4522-4527 (FENPMY) is the Endocytosis signal element. A disordered region spans residues 4559-4582 (NYGRPIDPSEIVPEPKPASPGADE). A Phosphoserine modification is found at serine 4577. The interval 4597–4610 (QTTNFENPIYAEMD) is interaction with DAB2. The NPXY motif motif lies at 4603-4606 (NPIY). Positions 4606–4609 (YAEM) match the SH2-binding motif. Residues 4617-4660 (VAVAPPPSPSLPAKASKRNLTPGYTATEDTFKDTANLVKEDSDV) are disordered. Positions 4619–4630 (VAPPPSPSLPAK) match the SH3-binding motif. Serine 4624 carries the phosphoserine modification. A compositionally biased stretch (polar residues) spans 4634 to 4644 (RNLTPGYTATE). A Phosphothreonine modification is found at threonine 4637. Position 4658 is a phosphoserine (serine 4658).

This sequence belongs to the LDLR family. As to quaternary structure, binds plasminogen, extracellular matrix components, plasminogen activator-plasminogen activator inhibitor type I complex, apolipoprotein E-enriched beta-VLDL, lipoprotein lipase, lactoferrin, CLU/clusterin and calcium. Forms a multimeric complex together with LRPAP1. Interacts (via PxLPxI/L motif) with ANKRA2 (via ankyrin repeats). Interacts with LRP2BP. Interacts (via NPXY motif) with DAB2; the interaction is not affected by tyrosine phosphorylation of the NPXY motif. Interacts with MB. Interacts with BMP4. Interacts with the Sonic hedgehog protein N-product which is the active product of SHH. Interacts with CST3 in a calcium-dependent manner. Interacts with the vitamin-D binding protein GC/DBP. Interacts with sex hormone-binding protein SHBG. Interacts with angiotensin-2. Also interacts with angiotensin 1-7. Interacts with APOM. Interacts with selenoprotein SEPP1. Interacts with LEP. Interacts with ALB. Interacts with the antiapoptotic protein BIRC5/survivin. Interacts with matrix metalloproteinase MMP2 in complex with metalloproteinase inhibitor TIMP1. In neurons, forms a trimeric complex with APP and APPB1/FE65. Interacts with LDLRAP1/ARH; mediates trafficking of LRP2 to the endocytic recycling compartment. Does not interact with beta-amyloid protein 40 alone but interacts with the complex composed of beta-amyloid protein 40 and CLU/APOJ. Interacts with MDK. Post-translationally, a fraction undergoes proteolytic cleavage of the extracellular domain at the cell membrane to generate a cytoplasmic tail fragment. This is internalized into the early endosome from where it trafficks in an LDLRAP1/ARH-dependent manner to the endocytic recycling compartment (ERC). In the ERC, it is further cleaved by gamma-secretase to release a fragment which translocates to the nucleus and mediates transcriptional repression. N-glycosylation is required for ligand binding. In terms of tissue distribution, in the inner ear, expressed in the lumen of the endolymphatic sac where it localizes to macrophage-like cells as well as to mitochondria-rich and ribosome-rich epithelial cells (at protein level). In the inner ear, expressed in marginal cells of the stria vascularis, epithelial cells at the spiral prominence, epithelial cells of Reissner's membrane facing the cochlear duct, and Kolliker's organ (at protein level). Expressed in the choroid plexus epithelium in the brain (at protein level). In the brain, also expressed in astrocytes (at protein level). Expression also detected in epithelial cells of the kidney glomerulus and proximal tubule, lung, epididymis and yolk sac.

The protein resides in the apical cell membrane. The protein localises to the endosome lumen. It is found in the membrane. Its subcellular location is the clathrin-coated pit. It localises to the cell projection. The protein resides in the dendrite. The protein localises to the axon. Multiligand endocytic receptor. Acts together with CUBN to mediate endocytosis of high-density lipoproteins. Mediates receptor-mediated uptake of polybasic drugs such as aprotinin, aminoglycosides and polymyxin B. In the kidney, mediates the tubular uptake and clearance of leptin. Also mediates transport of leptin across the blood-brain barrier through endocytosis at the choroid plexus epithelium. Endocytosis of leptin in neuronal cells is required for hypothalamic leptin signaling and leptin-mediated regulation of feeding and body weight. Mediates endocytosis and subsequent lysosomal degradation of CST3 in kidney proximal tubule cells. Mediates renal uptake of 25-hydroxyvitamin D3 in complex with the vitamin D3 transporter GC/DBP. Mediates renal uptake of metallothionein-bound heavy metals. Together with CUBN, mediates renal reabsorption of myoglobin. Mediates renal uptake and subsequent lysosomal degradation of APOM. Plays a role in kidney selenium homeostasis by mediating renal endocytosis of selenoprotein SEPP1. Mediates renal uptake of the antiapoptotic protein BIRC5/survivin which may be important for functional integrity of the kidney. Mediates renal uptake of matrix metalloproteinase MMP2 in complex with metalloproteinase inhibitor TIMP1. Mediates endocytosis of Sonic hedgehog protein N-product (ShhN), the active product of SHH. Also mediates ShhN transcytosis. In the embryonic neuroepithelium, mediates endocytic uptake and degradation of BMP4, is required for correct SHH localization in the ventral neural tube and plays a role in patterning of the ventral telencephalon. Required at the onset of neurulation to sequester SHH on the apical surface of neuroepithelial cells of the rostral diencephalon ventral midline and to control PTCH1-dependent uptake and intracellular trafficking of SHH. During neurulation, required in neuroepithelial cells for uptake of folate bound to the folate receptor FOLR1 which is necessary for neural tube closure. In the adult brain, negatively regulates BMP signaling in the subependymal zone which enables neurogenesis to proceed. In astrocytes, mediates endocytosis of ALB which is required for the synthesis of the neurotrophic factor oleic acid. Involved in neurite branching. During optic nerve development, required for SHH-mediated migration and proliferation of oligodendrocyte precursor cells. Mediates endocytic uptake and clearance of SHH in the retinal margin which protects retinal progenitor cells from mitogenic stimuli and keeps them quiescent. Plays a role in reproductive organ development by mediating uptake in reproductive tissues of androgen and estrogen bound to the sex hormone binding protein SHBG. Mediates endocytosis of angiotensin-2. Also mediates endocytosis of angiotensin 1-7. Binds to the complex composed of beta-amyloid protein 40 and CLU/APOJ and mediates its endocytosis and lysosomal degradation. Required for embryonic heart development. Required for normal hearing, possibly through interaction with estrogen in the inner ear. This Rattus norvegicus (Rat) protein is Low-density lipoprotein receptor-related protein 2 (Lrp2).